Consider the following 141-residue polypeptide: Putative pre-16S rRNA nuclease (141 aa).

Belongs to the YqgF nuclease family.

It localises to the cytoplasm. In terms of biological role, could be a nuclease involved in processing of the 5'-end of pre-16S rRNA. The chain is Putative pre-16S rRNA nuclease from Coxiella burnetii (strain CbuG_Q212) (Coxiella burnetii (strain Q212)).